Consider the following 84-residue polypeptide: Gomesin-like peptide (84 aa).

The N-terminal stretch at Met1–Ala23 is a signal peptide. Gln24 carries the pyrrolidone carboxylic acid modification. 2 disulfide bridges follow: Cys25-Cys38 and Cys29-Cys34. Arginine amide is present on Arg41. Residues Gly42–Arg84 constitute a propeptide that is removed on maturation.

In terms of tissue distribution, expressed by the venom gland.

It localises to the secreted. In terms of biological role, antibacterial peptide. This chain is Gomesin-like peptide, found in Hadronyche infensa (Fraser island funnel-web spider).